Consider the following 27-residue polypeptide: Flagellar filament 31.5 kDa core protein (27 aa).

The protein belongs to the bacterial flagellin family. The flagellum consists of an outer layer composed of repeating units of FlaA around a core that contains one or all of five antigenically related polypeptides.

Its subcellular location is the periplasmic flagellum. The protein resides in the periplasm. In terms of biological role, component of the core of the flagella. The protein is Flagellar filament 31.5 kDa core protein of Spirochaeta aurantia.